The following is a 426-amino-acid chain: MLDLKRIRNNSNEIKEALNNRGEKFDVTVIDEVLKLDEERRNILVKVEVLKSKRNQVSSEVPKLKKEGKDVSNIVAEMKNLSEEIKGFDATLAKIDEKIQYIMLRIPNIPNPQVPDGETDEDNIEIRNWLEPTKFDFEPKAHWDIGTNLNILDFQRAGKVTGSRFTFYKGLGARLERAVISYFLDTHTEKHGYIEILPPYMVNRTSMIGTGQLPKFEEDAFKISEDDYFLIPTAEVPVTNLYRDEVLKGDELPLKHVAYSACFRSEAGSAGRDTRGLVRQHQFNKVELVKFTKPEQSYDELEKLTNDAETVLKELGIPYRVVRICKGDLGFTAALKYDLEVWMPSYNRYVEISSCSNFEDFQARRANIRYKEDSKAKPQYVHTLNGSGVAIGRTVAAILENYQNEDGSVTIPEVLRPYMGGKEAIK.

233–235 (TAE) is an L-serine binding site. Residue 264-266 (RSE) participates in ATP binding. E287 contributes to the L-serine binding site. 351 to 354 (EISS) provides a ligand contact to ATP. Position 387 (S387) interacts with L-serine.

The protein belongs to the class-II aminoacyl-tRNA synthetase family. Type-1 seryl-tRNA synthetase subfamily. In terms of assembly, homodimer. The tRNA molecule binds across the dimer.

It localises to the cytoplasm. It carries out the reaction tRNA(Ser) + L-serine + ATP = L-seryl-tRNA(Ser) + AMP + diphosphate + H(+). The enzyme catalyses tRNA(Sec) + L-serine + ATP = L-seryl-tRNA(Sec) + AMP + diphosphate + H(+). It functions in the pathway aminoacyl-tRNA biosynthesis; selenocysteinyl-tRNA(Sec) biosynthesis; L-seryl-tRNA(Sec) from L-serine and tRNA(Sec): step 1/1. Its function is as follows. Catalyzes the attachment of serine to tRNA(Ser). Is also able to aminoacylate tRNA(Sec) with serine, to form the misacylated tRNA L-seryl-tRNA(Sec), which will be further converted into selenocysteinyl-tRNA(Sec). The chain is Serine--tRNA ligase from Clostridium botulinum (strain 657 / Type Ba4).